The following is a 289-amino-acid chain: 4-diphosphocytidyl-2-C-methyl-D-erythritol kinase (289 aa).

The active site involves Lys-10. Pro-94–Ser-104 serves as a coordination point for ATP. The active site involves Asp-136.

It belongs to the GHMP kinase family. IspE subfamily.

The enzyme catalyses 4-CDP-2-C-methyl-D-erythritol + ATP = 4-CDP-2-C-methyl-D-erythritol 2-phosphate + ADP + H(+). The protein operates within isoprenoid biosynthesis; isopentenyl diphosphate biosynthesis via DXP pathway; isopentenyl diphosphate from 1-deoxy-D-xylulose 5-phosphate: step 3/6. Its function is as follows. Catalyzes the phosphorylation of the position 2 hydroxy group of 4-diphosphocytidyl-2C-methyl-D-erythritol. The protein is 4-diphosphocytidyl-2-C-methyl-D-erythritol kinase of Geobacillus sp. (strain WCH70).